The primary structure comprises 358 residues: Cyclin-dependent kinase 11 (358 aa).

A Protein kinase domain is found at phenylalanine 52–phenylalanine 336. ATP-binding positions include isoleucine 58–valine 66 and lysine 81. Aspartate 176 functions as the Proton acceptor in the catalytic mechanism.

Belongs to the protein kinase superfamily. CMGC Ser/Thr protein kinase family. CDC2/CDKX subfamily.

The catalysed reaction is L-seryl-[protein] + ATP = O-phospho-L-seryl-[protein] + ADP + H(+). The enzyme catalyses L-threonyl-[protein] + ATP = O-phospho-L-threonyl-[protein] + ADP + H(+). The chain is Cyclin-dependent kinase 11 (cdk11) from Dictyostelium discoideum (Social amoeba).